Reading from the N-terminus, the 920-residue chain is Nonribosomal peptide synthetase atrA (920 aa).

The tract at residues 13–428 is adenylation (A) domain; the sequence is AAAQERCGRV…AGRLKETMII (416 aa). In terms of domain architecture, Carrier spans 558-637; it reads PPKDELERSL…ELSAALHDLQ (80 aa). Serine 595 carries the O-(pantetheine 4'-phosphoryl)serine modification. The segment at 656–905 is thioesterase (TE) domain; that stretch reads PLWLIHPGVG…YTMLAPEHVF (250 aa).

It belongs to the NRP synthetase family.

It carries out the reaction 2 3-(4-hydroxyphenyl)pyruvate + 2 ATP = atromentin + 2 AMP + 2 diphosphate + H(+). Nonribosomal peptide synthetase that mediates the biosynthesis of atromentin. AtrA first activates 4-hydroxyphenylpyruvate (HPPA) through its A domain to AMP-HPPA. The HPPA unit is then loaded to the T domain and eventually transferred to the TE domain. Another HPPA unit is then loaded onto the T domain. The TE domain then catalyzes the condensation of the two HPPA units and the release of atromentin via cyclization. This Aspergillus terreus (strain NIH 2624 / FGSC A1156) protein is Nonribosomal peptide synthetase atrA.